The primary structure comprises 708 residues: Glycogen [starch] synthase isoform 1 (708 aa).

Residue arginine 20 coordinates UDP. Serine 159 bears the Phosphoserine mark. UDP-alpha-D-glucose is bound by residues histidine 193 and arginine 199. Residues histidine 280, glutamate 281, glutamine 283, histidine 286, and lysine 290 each coordinate alpha-D-glucose 6-phosphate. A UDP-binding site is contributed by arginine 320. Arginine 320 serves as a coordination point for UDP-alpha-D-glucose. Serine 363 bears the Phosphoserine mark. Histidine 500 serves as a coordination point for alpha-D-glucose 6-phosphate. UDP-alpha-D-glucose is bound by residues glutamate 509, tryptophan 511, and glycine 512. Residue threonine 514 participates in UDP binding. Serine 560 bears the Phosphoserine mark. Alpha-D-glucose 6-phosphate contacts are provided by arginine 583 and arginine 587. Serine 651 and serine 655 each carry phosphoserine. Residues serine 660 and serine 662 each carry the phosphoserine; by PKA modification. The disordered stretch occupies residues serine 687–asparagine 708. The span at aspartate 693–asparagine 708 shows a compositional bias: acidic residues.

Belongs to the glycosyltransferase 3 family.

The catalysed reaction is [(1-&gt;4)-alpha-D-glucosyl](n) + UDP-alpha-D-glucose = [(1-&gt;4)-alpha-D-glucosyl](n+1) + UDP + H(+). The protein operates within glycan biosynthesis; glycogen biosynthesis. Its activity is regulated as follows. Allosteric activation by glucose-6-phosphate, and phosphorylation by a cAMP-dependent kinase. In terms of biological role, glycogen synthase participates in the glycogen biosynthetic process along with glycogenin and glycogen branching enzyme. Extends the primer composed of a few glucose units formed by glycogenin by adding new glucose units to it. In this context, glycogen synthase transfers the glycosyl residue from UDP-Glc to the non-reducing end of alpha-1,4-glucan. The protein is Glycogen [starch] synthase isoform 1 (GSY1) of Saccharomyces cerevisiae (strain ATCC 204508 / S288c) (Baker's yeast).